Consider the following 210-residue polypeptide: Large ribosomal subunit protein uL3 (210 aa).

Positions 125–154 (RHGFRGGPKTHGQSDRHRAPGSIGAGTTPG) are disordered.

Belongs to the universal ribosomal protein uL3 family. As to quaternary structure, part of the 50S ribosomal subunit. Forms a cluster with proteins L14 and L19.

One of the primary rRNA binding proteins, it binds directly near the 3'-end of the 23S rRNA, where it nucleates assembly of the 50S subunit. The polypeptide is Large ribosomal subunit protein uL3 (Chloroflexus aggregans (strain MD-66 / DSM 9485)).